We begin with the raw amino-acid sequence, 61 residues long: Putative antitoxin PYRAB11980 (61 aa).

It belongs to the UPF0165 family.

Its function is as follows. Possibly the antitoxin component of a type II toxin-antitoxin (TA) system. This chain is Putative antitoxin PYRAB11980, found in Pyrococcus abyssi (strain GE5 / Orsay).